The following is a 179-amino-acid chain: Probable mitochondrial import inner membrane translocase subunit Tim17 1 (179 aa).

3 consecutive transmembrane segments (helical) span residues 17–37 (CGGAFAMGALGGGAFQAIKGF), 61–81 (LVGGNFAVWGATFSAIDCSLV), and 113–133 (LSSALVGGALLALIEGVGIVV).

Belongs to the Tim17/Tim22/Tim23 family. Component of the TIM23 complex at least composed of Tim23, Tim17 (Tim17a1, Tim17a2 or Tim17b1) and a Tim50. The complex interacts with the Tim44 component of the PAM complex.

The protein localises to the mitochondrion inner membrane. Essential component of the TIM23 complex, a complex that mediates the translocation of transit peptide-containing proteins across the mitochondrial inner membrane. This chain is Probable mitochondrial import inner membrane translocase subunit Tim17 1 (Tim17b1), found in Drosophila melanogaster (Fruit fly).